Here is a 539-residue protein sequence, read N- to C-terminus: Chaperonin GroEL 1 (539 aa).

ATP-binding positions include 29–32 (TLGP), 86–90 (DGTTT), Gly413, 478–480 (NAA), and Asp494. The tract at residues 520 to 539 (IVDKPAEPEDDGHGHHGHAH) is disordered. The span at 523-533 (KPAEPEDDGHG) shows a compositional bias: basic and acidic residues.

This sequence belongs to the chaperonin (HSP60) family. Forms a cylinder of 14 subunits composed of two heptameric rings stacked back-to-back. Interacts with the co-chaperonin GroES.

It is found in the cytoplasm. It carries out the reaction ATP + H2O + a folded polypeptide = ADP + phosphate + an unfolded polypeptide.. Its function is as follows. Together with its co-chaperonin GroES, plays an essential role in assisting protein folding. The GroEL-GroES system forms a nano-cage that allows encapsulation of the non-native substrate proteins and provides a physical environment optimized to promote and accelerate protein folding. In Mycobacterium ulcerans (strain Agy99), this protein is Chaperonin GroEL 1.